The chain runs to 191 residues: Fe/S biogenesis protein NfuA (191 aa).

[4Fe-4S] cluster-binding residues include cysteine 149 and cysteine 152.

Belongs to the NfuA family. Homodimer. [4Fe-4S] cluster is required as a cofactor.

Its function is as follows. Involved in iron-sulfur cluster biogenesis. Binds a 4Fe-4S cluster, can transfer this cluster to apoproteins, and thereby intervenes in the maturation of Fe/S proteins. Could also act as a scaffold/chaperone for damaged Fe/S proteins. The sequence is that of Fe/S biogenesis protein NfuA from Salmonella paratyphi A (strain ATCC 9150 / SARB42).